Reading from the N-terminus, the 102-residue chain is Small ribosomal subunit protein uS10 (102 aa).

The protein belongs to the universal ribosomal protein uS10 family. Part of the 30S ribosomal subunit.

Functionally, involved in the binding of tRNA to the ribosomes. The chain is Small ribosomal subunit protein uS10 from Clostridium acetobutylicum (strain ATCC 824 / DSM 792 / JCM 1419 / IAM 19013 / LMG 5710 / NBRC 13948 / NRRL B-527 / VKM B-1787 / 2291 / W).